A 265-amino-acid polypeptide reads, in one-letter code: Phosphate import ATP-binding protein PstB (265 aa).

An ABC transporter domain is found at 18 to 260; the sequence is MECRDCHVYY…PEDPRTESYI (243 aa). An ATP-binding site is contributed by 50–57; that stretch reads GPSGCGKS.

The protein belongs to the ABC transporter superfamily. Phosphate importer (TC 3.A.1.7) family. In terms of assembly, the complex is composed of two ATP-binding proteins (PstB), two transmembrane proteins (PstC and PstA) and a solute-binding protein (PstS).

It localises to the cell inner membrane. The catalysed reaction is phosphate(out) + ATP + H2O = ADP + 2 phosphate(in) + H(+). Functionally, part of the ABC transporter complex PstSACB involved in phosphate import. Responsible for energy coupling to the transport system. This is Phosphate import ATP-binding protein PstB from Ruegeria pomeroyi (strain ATCC 700808 / DSM 15171 / DSS-3) (Silicibacter pomeroyi).